Here is a 144-residue protein sequence, read N- to C-terminus: 6,7-dimethyl-8-ribityllumazine synthase (144 aa).

5-amino-6-(D-ribitylamino)uracil contacts are provided by residues Phe21, 56–58, and 80–82; these read AYE and AVI. 85-86 serves as a coordination point for (2S)-2-hydroxy-3-oxobutyl phosphate; that stretch reads GT. His88 functions as the Proton donor in the catalytic mechanism. Position 113 (Phe113) interacts with 5-amino-6-(D-ribitylamino)uracil. Arg127 lines the (2S)-2-hydroxy-3-oxobutyl phosphate pocket.

Belongs to the DMRL synthase family. As to quaternary structure, forms an icosahedral capsid composed of 60 subunits, arranged as a dodecamer of pentamers.

The catalysed reaction is (2S)-2-hydroxy-3-oxobutyl phosphate + 5-amino-6-(D-ribitylamino)uracil = 6,7-dimethyl-8-(1-D-ribityl)lumazine + phosphate + 2 H2O + H(+). The protein operates within cofactor biosynthesis; riboflavin biosynthesis; riboflavin from 2-hydroxy-3-oxobutyl phosphate and 5-amino-6-(D-ribitylamino)uracil: step 1/2. In terms of biological role, catalyzes the formation of 6,7-dimethyl-8-ribityllumazine by condensation of 5-amino-6-(D-ribitylamino)uracil with 3,4-dihydroxy-2-butanone 4-phosphate. This is the penultimate step in the biosynthesis of riboflavin. The polypeptide is 6,7-dimethyl-8-ribityllumazine synthase (ribH) (Photobacterium leiognathi).